A 330-amino-acid chain; its full sequence is Putative glycosyltransferase HI_0258 (330 aa).

Positions 1-31 are enriched in basic and acidic residues; that stretch reads MTDRQTDRQTDRQTDRQTDRQTDRQTDRQTD. The interval 1–32 is disordered; sequence MTDRQTDRQTDRQTDRQTDRQTDRQTDRQTDG. UDP contacts are provided by residues 44–49 and 140–141; these read SSDHYY and DV. Positions 140, 142, and 270 each coordinate Mn(2+). Residue 270 to 276 participates in UDP binding; it reads HYCGPNK.

It belongs to the glycosyltransferase 8 family.

This chain is Putative glycosyltransferase HI_0258, found in Haemophilus influenzae (strain ATCC 51907 / DSM 11121 / KW20 / Rd).